The primary structure comprises 238 residues: Protein Iojap, chloroplastic (238 aa).

A chloroplast-targeting transit peptide spans 1-66; the sequence is MASSTGLTVA…KILTSLSNSR (66 aa).

Belongs to the Iojap/RsfS family. In terms of assembly, interacts with chloroplast ribosomal protein uL14c (rpl14).

The protein resides in the plastid. The protein localises to the chloroplast. Its function is as follows. May be a ribosome silencing factor (Potential). Involved in plastid biogenesis. The sequence is that of Protein Iojap, chloroplastic (IJ) from Arabidopsis thaliana (Mouse-ear cress).